The chain runs to 289 residues: Bidirectional sugar transporter SWEET15 (289 aa).

At 1–10 the chain is on the extracellular side; the sequence is MAMAMANHHT. Residues 11 to 31 traverse the membrane as a helical segment; sequence LGLIFGILGNIISFLVYFAPA. A MtN3/slv 1 domain is found at 14 to 100; the sequence is IFGILGNIIS…LYFFYAPMQA (87 aa). At 32-45 the chain is on the cytoplasmic side; the sequence is PTFYRIYKRKSAEG. Residues 46–66 form a helical membrane-spanning segment; that stretch reads FHSLPYIVALFSAMLWLYYAL. Residues 67–70 are Extracellular-facing; the sequence is LKKD. The helical transmembrane segment at 71-91 threads the bilayer; it reads AFLLITINSFGCAIESFYILL. At 92-106 the chain is on the cytoplasmic side; the sequence is YFFYAPMQAKKQTLK. Residues 107–127 traverse the membrane as a helical segment; it reads VVISLNVGVFSILVVLIQFLL. At 128 to 134 the chain is on the extracellular side; the sequence is KGSNRIN. The chain crosses the membrane as a helical span at residues 135-155; it reads VFGWICASFSVAVFAAPLSIV. In terms of domain architecture, MtN3/slv 2 spans 136 to 219; that stretch reads FGWICASFSV…VLYGFYRNAG (84 aa). The Cytoplasmic segment spans residues 156 to 167; the sequence is AKVIRTKSVEFM. The helical transmembrane segment at 168-188 threads the bilayer; that stretch reads PFSLSFFLTLSAIMWFAYGLL. Topologically, residues 189–193 are extracellular; it reads KNDPC. A helical transmembrane segment spans residues 194–214; it reads VAIPNILGVILGLVQMVLYGF. The Cytoplasmic portion of the chain corresponds to 215–289; sequence YRNAGKEKME…GELQPNGSTV (75 aa). A disordered region spans residues 249–289; it reads GAQQNGIKKSGSEDVKDDEETGNREKSTENSGELQPNGSTV. Over residues 277 to 289 the composition is skewed to polar residues; the sequence is ENSGELQPNGSTV.

This sequence belongs to the SWEET sugar transporter family. As to quaternary structure, forms homooligomers and/or heterooligomers.

It is found in the cell membrane. In terms of biological role, mediates both low-affinity uptake and efflux of sugar across the plasma membrane. The sequence is that of Bidirectional sugar transporter SWEET15 from Vitis vinifera (Grape).